Reading from the N-terminus, the 388-residue chain is Diacylglycerol O-acyltransferase 2 (388 aa).

Residues 1 to 69 (MKTLIAAYSG…NRSKVEKQLQ (69 aa)) lie on the Cytoplasmic side of the membrane. The chain crosses the membrane as a helical span at residues 70 to 88 (VISVLQWVLSFLVLGVACS). The Lumenal portion of the chain corresponds to 89-92 (VILM). The chain crosses the membrane as a helical span at residues 93–112 (YTFCTDCWLIAVLYFTWLAF). Residues 113-388 (DWNTPKKGGR…LPETEVLEVN (276 aa)) are Cytoplasmic-facing.

This sequence belongs to the diacylglycerol acyltransferase family. As to quaternary structure, forms multimeric complexes consisting of several DGAT2 subunits. Interacts with SLC27A1 and this interaction is enhanced in the presence of ZFYVE1. As to expression, predominantly expressed in liver. Also expressed in testis.

The protein resides in the endoplasmic reticulum membrane. It is found in the lipid droplet. The protein localises to the cytoplasm. Its subcellular location is the perinuclear region. It carries out the reaction an acyl-CoA + a 1,2-diacyl-sn-glycerol = a triacyl-sn-glycerol + CoA. The enzyme catalyses all-trans-retinol + an acyl-CoA = an all-trans-retinyl ester + CoA. The catalysed reaction is 1,2-di-(9Z-octadecenoyl)-sn-glycerol + hexadecanoyl-CoA = 1,2-di-(9Z)-octadecenoyl-3-hexadecanoyl-sn-glycerol + CoA. It catalyses the reaction 1,2-di-(9Z-octadecenoyl)-sn-glycerol + (9Z)-octadecenoyl-CoA = 1,2,3-tri-(9Z-octadecenoyl)-glycerol + CoA. It carries out the reaction 1,3-di-(9Z-octadecenoyl)-glycerol + (9Z)-octadecenoyl-CoA = 1,2,3-tri-(9Z-octadecenoyl)-glycerol + CoA. The enzyme catalyses 2,3-di-(9Z)-octadecenoyl-sn-glycerol + (9Z)-octadecenoyl-CoA = 1,2,3-tri-(9Z-octadecenoyl)-glycerol + CoA. The catalysed reaction is 2-(9Z-octadecenoyl)-glycerol + hexadecanoyl-CoA = 1-hexadecanoyl-2-(9Z-octadecenoyl)-sn-glycerol + CoA. It catalyses the reaction 2-(9Z-octadecenoyl)-glycerol + (9Z)-octadecenoyl-CoA = 1,2-di-(9Z-octadecenoyl)-sn-glycerol + CoA. It carries out the reaction all-trans-retinol + hexadecanoyl-CoA = all-trans-retinyl hexadecanoate + CoA. The enzyme catalyses 1-O-(9Z-octadecenyl)-glycerol + (9Z)-octadecenoyl-CoA = 1-O-(9Z-octadecyl)-3-(9Z-octadecenoyl)-glycerol + CoA. The catalysed reaction is 1-(9Z-octadecenoyl)-glycerol + (9Z)-octadecenoyl-CoA = 1,2-di-(9Z-octadecenoyl)-glycerol + CoA. The protein operates within glycerolipid metabolism; triacylglycerol biosynthesis. Its activity is regulated as follows. Inhibited by niacin. Its function is as follows. Essential acyltransferase that catalyzes the terminal and only committed step in triacylglycerol synthesis by using diacylglycerol and fatty acyl CoA as substrates. Required for synthesis and storage of intracellular triglycerides. Probably plays a central role in cytosolic lipid accumulation. In liver, is primarily responsible for incorporating endogenously synthesized fatty acids into triglycerides. Also functions as an acyl-CoA retinol acyltransferase (ARAT). Also able to use 1-monoalkylglycerol (1-MAkG) as an acyl acceptor for the synthesis of monoalkyl-monoacylglycerol (MAMAG). This chain is Diacylglycerol O-acyltransferase 2, found in Mus musculus (Mouse).